The following is a 150-amino-acid chain: Globin-3 (150 aa).

One can recognise a Globin domain in the interval P11–Y150. Residues H74 and H106 each coordinate heme b.

It belongs to the globin family. Monomer.

In Mordacia mordax (Southern hemisphere lamprey), this protein is Globin-3.